Here is a 741-residue protein sequence, read N- to C-terminus: Double-stranded RNA-specific editase 1 (741 aa).

Residues 1 to 79 form a disordered region; sequence MDIEDEENMS…RRKTPGPVLP (79 aa). The residue at position 26 (S26) is a Phosphoserine. Gly residues predominate over residues 33–49; the sequence is PGPGEGSQLSNGGGGGP. Positions 63–73 are enriched in basic residues; sequence SKYRLKKRRKT. The 67-residue stretch at 78-144 folds into the DRBM 1 domain; it reads LPKNALMQLN…AEKALRSFVQ (67 aa). Interaction with substrate RNA regions lie at residues 83–88 and 104–105; these read LMQLNE and VH. The residue at position 149 (S149) is a Phosphoserine. One can recognise a DRBM 2 domain in the interval 231-298; that stretch reads PSGKNPVMIL…AQSALAAIFN (68 aa). 2 interaction with substrate RNA regions span residues 237 to 242 and H259; that span reads VMILNE. The A to I editase domain maps to 370–737; it reads SVSTGTKCIN…VEKPTEQDQF (368 aa). H394 provides a ligand contact to Zn(2+). E396 (proton donor) is an active-site residue. 1D-myo-inositol hexakisphosphate is bound by residues R400 and R401. C451 contributes to the Zn(2+) binding site. The tract at residues 486–518 is disordered; the sequence is RPPGLLSDPSTSTFQGAGTTEPADRHPNRKARG. The span at 493-503 shows a compositional bias: polar residues; the sequence is DPSTSTFQGAG. C556 serves as a coordination point for Zn(2+). 1D-myo-inositol hexakisphosphate is bound by residues K559, R562, K669, K702, K712, and K730.

Homodimer. Homodimerization is essential for its catalytic activity. Can form heterodimers with isoform 5 of ADAR/ADAR1. It depends on 1D-myo-inositol hexakisphosphate as a cofactor. As to expression, highly expressed in brain and heart and at lower levels in placenta. Fair expression in lung, liver and kidney. Detected in brain, heart, kidney, lung and liver (at protein level). Highly expressed in hippocampus and colon. Expressed in pediatric astrocytomas and the protein has a decreased RNA-editing activity. The decrease in RNA editing correlates with the grade of malignancy of the tumors, with the high grade tumors showing lower editing is seen.

It is found in the nucleus. The protein localises to the nucleolus. The catalysed reaction is adenosine in double-stranded RNA + H2O + H(+) = inosine in double-stranded RNA + NH4(+). In terms of biological role, catalyzes the hydrolytic deamination of adenosine to inosine in double-stranded RNA (dsRNA) referred to as A-to-I RNA editing. This may affect gene expression and function in a number of ways that include mRNA translation by changing codons and hence the amino acid sequence of proteins; pre-mRNA splicing by altering splice site recognition sequences; RNA stability by changing sequences involved in nuclease recognition; genetic stability in the case of RNA virus genomes by changing sequences during viral RNA replication; and RNA structure-dependent activities such as microRNA production or targeting or protein-RNA interactions. Can edit both viral and cellular RNAs and can edit RNAs at multiple sites (hyper-editing) or at specific sites (site-specific editing). Its cellular RNA substrates include: bladder cancer-associated protein (BLCAP), neurotransmitter receptors for glutamate (GRIA2 and GRIK2) and serotonin (HTR2C), GABA receptor (GABRA3) and potassium voltage-gated channel (KCNA1). Site-specific RNA editing of transcripts encoding these proteins results in amino acid substitutions which consequently alter their functional activities. Edits GRIA2 at both the Q/R and R/G sites efficiently but converts the adenosine in hotspot1 much less efficiently. Can exert a proviral effect towards human immunodeficiency virus type 1 (HIV-1) and enhances its replication via both an editing-dependent and editing-independent mechanism. The former involves editing of adenosines in the 5'UTR while the latter occurs via suppression of EIF2AK2/PKR activation and function. Can inhibit cell proliferation and migration and can stimulate exocytosis. Its function is as follows. Has a lower catalytic activity than isoform 2. Functionally, has a higher catalytic activity than isoform 1. The protein is Double-stranded RNA-specific editase 1 of Homo sapiens (Human).